The chain runs to 92 residues: Protein LSO2 (92 aa).

Basic and acidic residues-rich tracts occupy residues 1 to 10 (MGKRFSESAA) and 38 to 72 (EASKWEQGSRKENAKKLEEEQKRQEKARAKKERDA). The segment at 1 to 92 (MGKRFSESAA…KGGKGKRKMK (92 aa)) is disordered. A coiled-coil region spans residues 17–80 (ARKRDQAHAK…DALLTAEEEQ (64 aa)).

Belongs to the CCDC124 family. As to quaternary structure, associates with translationally inactive ribosomes in the nonrotated state. LSO2 bridges the decoding sites of the small with the GTPase activating center (GAC) of the large subunit. This position allows accommodation of the DOM34-dependent ribosome recycling system, which splits LSO2-containing ribosomes.

It is found in the nucleus. Its subcellular location is the cytoplasm. Functionally, ribosome-binding protein involved in ribosome hibernation by associating with translationally inactive ribosomes. Required for translational recovery after starvation from stationary phase. May facilitate rapid translation reactivation by stabilizing the recycling-competent state of inactive ribosomes. The polypeptide is Protein LSO2 (Saccharomyces cerevisiae (strain ATCC 204508 / S288c) (Baker's yeast)).